The chain runs to 105 residues: Small ribosomal subunit protein uS10 (105 aa).

Belongs to the universal ribosomal protein uS10 family. As to quaternary structure, part of the 30S ribosomal subunit.

Its function is as follows. Involved in the binding of tRNA to the ribosomes. In Desulfovibrio desulfuricans (strain ATCC 27774 / DSM 6949 / MB), this protein is Small ribosomal subunit protein uS10.